The chain runs to 47 residues: Sperm protamine P1 (47 aa).

It belongs to the protamine P1 family. As to expression, testis.

The protein localises to the nucleus. The protein resides in the chromosome. Protamines substitute for histones in the chromatin of sperm during the haploid phase of spermatogenesis. They compact sperm DNA into a highly condensed, stable and inactive complex. The chain is Sperm protamine P1 (PRM1) from Orcinus orca (Killer whale).